Reading from the N-terminus, the 313-residue chain is PGR5-like protein 1B, chloroplastic (313 aa).

Residues 1–49 (MAFTLTIPRFSAISRKPITCSSSRTQCPAPFTHGRSISLRRRLTLLPLK) constitute a chloroplast transit peptide. Position 50 is an N-acetylalanine (Ala50). Residues 50–187 (ASTDQSGQVG…KVYSDLAIDY (138 aa)) are Stromal-facing. A disulfide bridge links Cys71 with Cys172. A helical membrane pass occupies residues 188–208 (FKMFLLNVPATVVALGLFFFL). The Lumenal, thylakoid segment spans residues 209 to 225 (DDITGFEITYLLELPEP). Residues 226 to 246 (FSFIFTWFAAVPAIVYLALSL) traverse the membrane as a helical segment. Topologically, residues 247–313 (TKLILKDFLI…LITLPEGGKA (67 aa)) are stromal.

It belongs to the PGR5 family. As to quaternary structure, homodimer and heterodimer with PGR5. Interacts with PGR5, FD2, psaD1, LFNR1 and LFNR2. Also interacts with petC and a Fe-containing cofactor (FCC). Disulfide bonds; Cys-289 and Cys-292 are probably involved in the formation of disulfide bridges with 'Cys-11' and 'Cys-105' of PGR5 while Cys-261 and Cys-264 are probably involved in the binding of a Fe-containing cofactor (FCC).

It is found in the plastid. Its subcellular location is the chloroplast thylakoid membrane. Its activity is regulated as follows. Inhibited by antimycin A. Its function is as follows. Ferredoxin-plastoquinone reductase involved in cyclic electron flow (CEF) around photosystem I. The homodimer is probably not involved in CEF. The sequence is that of PGR5-like protein 1B, chloroplastic (PGRL1B) from Arabidopsis thaliana (Mouse-ear cress).